The following is a 134-amino-acid chain: Methylglyoxal synthase (134 aa).

Residues 1-134 enclose the MGS-like domain; sequence MHIALIAHDE…DWRDLRRNDE (134 aa). Substrate-binding positions include His8, Lys12, 34-37, and 54-55; these read TGTT and SG. The active-site Proton donor/acceptor is the Asp60. A substrate-binding site is contributed by His87.

Belongs to the methylglyoxal synthase family.

It carries out the reaction dihydroxyacetone phosphate = methylglyoxal + phosphate. In terms of biological role, catalyzes the formation of methylglyoxal from dihydroxyacetone phosphate. In Listeria welshimeri serovar 6b (strain ATCC 35897 / DSM 20650 / CCUG 15529 / CIP 8149 / NCTC 11857 / SLCC 5334 / V8), this protein is Methylglyoxal synthase.